The sequence spans 481 residues: Phloretin 4'-O-glucosyltransferase (481 aa).

The active-site Proton acceptor is the His16. His16 is a binding site for an anthocyanidin. Residues Gln354, His369, Trp372, Asn373, Ser374, Glu377, Asp393, and Gln394 each coordinate UDP-alpha-D-glucose.

This sequence belongs to the UDP-glycosyltransferase family. In terms of tissue distribution, highly expressed in young leaves, at intermediate level in mature leaves and at low levels in flowers and fruits.

The enzyme catalyses phloretin + UDP-alpha-D-glucose = trilobatin + UDP + H(+). The catalysed reaction is (2S)-naringenin + UDP-alpha-D-glucose = (2S)-naringenin 7-O-beta-D-glucoside + UDP + H(+). In terms of biological role, glycosyltransferase that possesses phloretin 4'-O-glycosyltransferase activity. Converts phloretin to trilobatin (phloretin 4'-O-glucoside), a potential antioxidant. Can convert with low efficiency phlorizin and trilobatin to their corresponding di-O-glucosides. Can convert with low efficiency naringenin to naringenin-7-O-glucoside. Can convert with low efficiency quercetin to quercetin-7-O-glucoside. The chain is Phloretin 4'-O-glucosyltransferase from Malus domestica (Apple).